Consider the following 399-residue polypeptide: Protein LIGULELESS 1 (399 aa).

Residues 1-28 (MMNLSAAANGRDEFPPYVVPSNAAAPPP) form a disordered region. Over residues 15–24 (PPYVVPSNAA) the composition is skewed to low complexity. Residues 182–260 (PPRCQAEGCK…ADHNRRRRKS (79 aa)) form an SBP-type zinc finger. Zn(2+) is bound by residues Cys185, Cys190, Cys207, His210, Cys227, Cys230, His234, and Cys246. The Bipartite nuclear localization signal motif lies at 243-259 (KKSCRKRLADHNRRRRK). Residues 250 to 292 (LADHNRRRRKSKPSDADAGDKKRAHANKAAAAKDKAESSSKNM) form a disordered region. Over residues 261–270 (KPSDADAGDK) the composition is skewed to basic and acidic residues.

In terms of tissue distribution, leaf ligular region, blade and sheath.

The protein localises to the nucleus. Functionally, involved in the formation of ligules and auricles during leaf organogenesis. This is Protein LIGULELESS 1 (LG1) from Zea mays (Maize).